Reading from the N-terminus, the 221-residue chain is Histone H1.3 (221 aa).

Positions 1–17 (MSETAPLAPTIPAPAEK) are enriched in low complexity. The segment at 1–43 (MSETAPLAPTIPAPAEKTPVKKKAKKAGATAGKRKASGPPVSE) is disordered. Ser2 is modified (N-acetylserine). Position 2 is a phosphoserine (Ser2). Lys17 carries the post-translational modification N6-acetyllysine. Position 18 is a phosphothreonine (Thr18). The span at 20 to 36 (VKKKAKKAGATAGKRKA) shows a compositional bias: basic residues. N6-(beta-hydroxybutyryl)lysine occurs at positions 35, 47, and 53. The H15 domain maps to 37-110 (SGPPVSELIT…GASGSFKLNK (74 aa)). Residue Arg55 is modified to Citrulline. Residues Lys65, Lys76, Lys86, and Lys91 each carry the N6-(beta-hydroxybutyryl)lysine modification. The interval 90-221 (SKGTLVQTKG…KAKKAAPKKK (132 aa)) is disordered. Position 105 is a phosphoserine; by PKC (Ser105). Lys107 carries the N6-(beta-hydroxybutyryl)lysine modification. 3 stretches are compositionally biased toward basic residues: residues 120–141 (KAKK…KPKK), 150–161 (KSIKKTPKKVKK), and 170–179 (KVAKSAKKVK). Lys170 bears the N6-(beta-hydroxybutyryl)lysine mark. Residues 180–193 (TPQPKKAAKSPAKA) are compositionally biased toward low complexity. Over residues 194 to 221 (KAPKPKAAKPKSGKPKVTKAKKAAPKKK) the composition is skewed to basic residues.

The protein belongs to the histone H1/H5 family. In terms of processing, H1 histones are progressively phosphorylated during the cell cycle, becoming maximally phosphorylated during late G2 phase and M phase, and being dephosphorylated sharply thereafter. Citrullination at Arg-55 (H1R54ci) by PADI4 takes place within the DNA-binding site of H1 and results in its displacement from chromatin and global chromatin decondensation, thereby promoting pluripotency and stem cell maintenance.

Its subcellular location is the nucleus. It localises to the chromosome. Histone H1 protein binds to linker DNA between nucleosomes forming the macromolecular structure known as the chromatin fiber. Histones H1 are necessary for the condensation of nucleosome chains into higher-order structured fibers. Also acts as a regulator of individual gene transcription through chromatin remodeling, nucleosome spacing and DNA methylation. The protein is Histone H1.3 of Homo sapiens (Human).